A 404-amino-acid chain; its full sequence is Ubiquitin-like modifier-activating enzyme 5 (404 aa).

Positions 83, 104, 127, 150, and 184 each coordinate ATP. Residues Cys-226 and Cys-229 each contribute to the Zn(2+) site. Cys-250 (glycyl thioester intermediate) is an active-site residue. Zn(2+)-binding residues include Cys-303 and Cys-308. A disordered region spans residues 372–393 (APEKSSETSEETVTAATADETS). Over residues 382–391 (ETVTAATADE) the composition is skewed to low complexity.

This sequence belongs to the ubiquitin-activating E1 family. UBA5 subfamily.

In terms of biological role, E1-like enzyme which activates UFM1. This chain is Ubiquitin-like modifier-activating enzyme 5, found in Drosophila simulans (Fruit fly).